A 64-amino-acid polypeptide reads, in one-letter code: Large ribosomal subunit protein bL35 (64 aa).

Positions 1 to 22 are enriched in basic residues; it reads MPKMKSHTGMGKRVRVTGKGKI. The interval 1-39 is disordered; it reads MPKMKSHTGMGKRVRVTGKGKIVKQQAGLRHNLEKKPST.

The protein belongs to the bacterial ribosomal protein bL35 family.

The protein is Large ribosomal subunit protein bL35 of Salinispora arenicola (strain CNS-205).